A 197-amino-acid polypeptide reads, in one-letter code: Phosphoheptose isomerase (197 aa).

Positions 36 to 197 constitute an SIS domain; the sequence is MVNALLNEGK…IDSQLFGSEE (162 aa). 51 to 53 serves as a coordination point for substrate; sequence NGG. Zn(2+)-binding residues include His60 and Glu64. Substrate is bound by residues Glu64, 93–94, 119–121, Ser124, and Gln174; these read ND and STS. Gln174 and His182 together coordinate Zn(2+).

This sequence belongs to the SIS family. GmhA subfamily. As to quaternary structure, homotetramer. It depends on Zn(2+) as a cofactor.

Its subcellular location is the cytoplasm. The catalysed reaction is 2 D-sedoheptulose 7-phosphate = D-glycero-alpha-D-manno-heptose 7-phosphate + D-glycero-beta-D-manno-heptose 7-phosphate. It participates in carbohydrate biosynthesis; D-glycero-D-manno-heptose 7-phosphate biosynthesis; D-glycero-alpha-D-manno-heptose 7-phosphate and D-glycero-beta-D-manno-heptose 7-phosphate from sedoheptulose 7-phosphate: step 1/1. Its function is as follows. Catalyzes the isomerization of sedoheptulose 7-phosphate in D-glycero-D-manno-heptose 7-phosphate. This is Phosphoheptose isomerase from Pseudomonas putida (strain W619).